Reading from the N-terminus, the 351-residue chain is Methylthioribose-1-phosphate isomerase (351 aa).

Substrate contacts are provided by residues 51–53 (RGA), Arg94, and Gln199. The active-site Proton donor is Asp240. 250 to 251 (NK) serves as a coordination point for substrate.

Belongs to the EIF-2B alpha/beta/delta subunits family. MtnA subfamily. In terms of assembly, homodimer.

It carries out the reaction 5-(methylsulfanyl)-alpha-D-ribose 1-phosphate = 5-(methylsulfanyl)-D-ribulose 1-phosphate. It participates in amino-acid biosynthesis; L-methionine biosynthesis via salvage pathway; L-methionine from S-methyl-5-thio-alpha-D-ribose 1-phosphate: step 1/6. In terms of biological role, catalyzes the interconversion of methylthioribose-1-phosphate (MTR-1-P) into methylthioribulose-1-phosphate (MTRu-1-P). The sequence is that of Methylthioribose-1-phosphate isomerase from Bacillus thuringiensis (strain Al Hakam).